The chain runs to 259 residues: ATP synthase subunit a (259 aa).

Helical transmembrane passes span threonine 29–phenylalanine 49, isoleucine 90–isoleucine 110, aspartate 134–isoleucine 154, leucine 208–proline 228, and alanine 230–valine 250.

The protein belongs to the ATPase A chain family. F-type ATPases have 2 components, CF(1) - the catalytic core - and CF(0) - the membrane proton channel. CF(1) has five subunits: alpha(3), beta(3), gamma(1), delta(1), epsilon(1). CF(0) has three main subunits: a(1), b(2) and c(9-12). The alpha and beta chains form an alternating ring which encloses part of the gamma chain. CF(1) is attached to CF(0) by a central stalk formed by the gamma and epsilon chains, while a peripheral stalk is formed by the delta and b chains.

It is found in the cell inner membrane. In terms of biological role, key component of the proton channel; it plays a direct role in the translocation of protons across the membrane. The protein is ATP synthase subunit a of Aeromonas salmonicida (strain A449).